Reading from the N-terminus, the 433-residue chain is Phosphoribosylamine--glycine ligase (433 aa).

Positions 110 to 317 constitute an ATP-grasp domain; it reads RNFMKKYGIE…FVDIMSAVVK (208 aa). 137 to 194 provides a ligand contact to ATP; the sequence is IEKLGDVAVKPSGLTGGKGVKVMGDQLPDLKAAKAYTSELLEKGSVVIEERFIGEEFT. Residues Gln-275, Glu-287, and Asn-289 each contribute to the Mg(2+) site. 3 residues coordinate Mn(2+): Gln-275, Glu-287, and Asn-289.

Belongs to the GARS family. Requires Mg(2+) as cofactor. The cofactor is Mn(2+).

It catalyses the reaction 5-phospho-beta-D-ribosylamine + glycine + ATP = N(1)-(5-phospho-beta-D-ribosyl)glycinamide + ADP + phosphate + H(+). It functions in the pathway purine metabolism; IMP biosynthesis via de novo pathway; N(1)-(5-phospho-D-ribosyl)glycinamide from 5-phospho-alpha-D-ribose 1-diphosphate: step 2/2. In Methanosarcina barkeri (strain Fusaro / DSM 804), this protein is Phosphoribosylamine--glycine ligase.